We begin with the raw amino-acid sequence, 397 residues long: ATP-dependent RNA helicase eIF4A (397 aa).

The short motif at 23–51 (YKFDDLNLKPNIVRGIFGYGYETPSAIQQ) is the Q motif element. Residues 54 to 224 (ILPITEGRDV…TKFMNNPVRI (171 aa)) enclose the Helicase ATP-binding domain. Residue 67–74 (AQSGTGKT) participates in ATP binding. A DEAD box motif is present at residues 172–175 (DEAD). Positions 235-396 (GIKQFYINVE…EMPADIGALF (162 aa)) constitute a Helicase C-terminal domain.

It belongs to the DEAD box helicase family. eIF4A subfamily. In terms of assembly, component of the eIF4F complex, which composition varies with external and internal environmental conditions. It is composed of at least eIF4A, eIF4E and eIF4G.

It is found in the cytoplasm. It catalyses the reaction ATP + H2O = ADP + phosphate + H(+). Its function is as follows. ATP-dependent RNA helicase which is a subunit of the eIF4F complex involved in cap recognition and is required for mRNA binding to ribosome. In the current model of translation initiation, eIF4A unwinds RNA secondary structures in the 5'-UTR of mRNAs which is necessary to allow efficient binding of the small ribosomal subunit, and subsequent scanning for the initiator codon. In Scheffersomyces stipitis (strain ATCC 58785 / CBS 6054 / NBRC 10063 / NRRL Y-11545) (Yeast), this protein is ATP-dependent RNA helicase eIF4A (TIF1).